The primary structure comprises 246 residues: Ribosomal RNA large subunit methyltransferase E (246 aa).

Positions 81, 83, 104, 120, and 144 each coordinate S-adenosyl-L-methionine. Lys-184 functions as the Proton acceptor in the catalytic mechanism.

Belongs to the class I-like SAM-binding methyltransferase superfamily. RNA methyltransferase RlmE family.

The protein resides in the cytoplasm. The catalysed reaction is uridine(2552) in 23S rRNA + S-adenosyl-L-methionine = 2'-O-methyluridine(2552) in 23S rRNA + S-adenosyl-L-homocysteine + H(+). Functionally, specifically methylates the uridine in position 2552 of 23S rRNA at the 2'-O position of the ribose in the fully assembled 50S ribosomal subunit. This Agrobacterium fabrum (strain C58 / ATCC 33970) (Agrobacterium tumefaciens (strain C58)) protein is Ribosomal RNA large subunit methyltransferase E.